The sequence spans 267 residues: Hemin import ATP-binding protein HmuV (267 aa).

The ABC transporter domain maps to 3 to 243 (LEVRGIEVWR…ELVARVFGLR (241 aa)). 35–42 (GPNGAGKS) is a binding site for ATP.

This sequence belongs to the ABC transporter superfamily. Heme (hemin) importer (TC 3.A.1.14.5) family. The complex is composed of two ATP-binding proteins (HmuV), two transmembrane proteins (HmuU) and a solute-binding protein (HmuT).

Its subcellular location is the cell inner membrane. Part of the ABC transporter complex HmuTUV involved in hemin import. Responsible for energy coupling to the transport system. This chain is Hemin import ATP-binding protein HmuV, found in Myxococcus xanthus (strain DK1622).